We begin with the raw amino-acid sequence, 115 residues long: Hydrogenase maturation factor HypA (115 aa).

His2 lines the Ni(2+) pocket. Residues Cys73, Cys76, Cys89, and Cys92 each contribute to the Zn(2+) site.

Belongs to the HypA/HybF family.

Involved in the maturation of [NiFe] hydrogenases. Required for nickel insertion into the metal center of the hydrogenase. The sequence is that of Hydrogenase maturation factor HypA from Aquifex aeolicus (strain VF5).